The primary structure comprises 214 residues: Adenylate kinase (214 aa).

10-15 serves as a coordination point for ATP; that stretch reads GAGKGT. Residues 30–59 form an NMP region; sequence STGDMLRAAIKAGTELGKQAKSVIDAGQLV. Residues threonine 31, arginine 36, 57 to 59, 85 to 88, and glutamine 92 contribute to the AMP site; these read QLV and GFPR. The tract at residues 122-159 is LID; that stretch reads GRRAHLASGRTYHNVYNPPKVEGKDDVTGEDLVIREDD. Residues arginine 123 and 132–133 each bind ATP; that span reads TY. Positions 156 and 167 each coordinate AMP. ATP is bound at residue lysine 200.

This sequence belongs to the adenylate kinase family. In terms of assembly, monomer.

The protein resides in the cytoplasm. It catalyses the reaction AMP + ATP = 2 ADP. It participates in purine metabolism; AMP biosynthesis via salvage pathway; AMP from ADP: step 1/1. Functionally, catalyzes the reversible transfer of the terminal phosphate group between ATP and AMP. Plays an important role in cellular energy homeostasis and in adenine nucleotide metabolism. This is Adenylate kinase from Photobacterium profundum (strain SS9).